Reading from the N-terminus, the 668-residue chain is Probable 6-phosphofructo-2-kinase PB17E12.14c (668 aa).

Basic and acidic residues predominate over residues 1–14; sequence MSNNNNKDDSELQS. Disordered stretches follow at residues 1-105 and 136-185; these read MSNN…GSRP and HRVP…EATN. Polar residues-rich tracts occupy residues 46 to 56, 65 to 86, and 164 to 184; these read NDHSFTNTDSV, SPVSTLTSNSANFSDSSLQNSP, and SSMSIPGQTSIVSSNNGSEAT. 197-204 lines the ATP pocket; the sequence is GLPARGKS. Active-site residues include Asp-281 and Cys-312. Residue Arg-346 participates in beta-D-fructose 6-phosphate binding. The active site involves Glu-540. The Proton donor role is filled by His-608.

It carries out the reaction beta-D-fructose 6-phosphate + ATP = beta-D-fructose 2,6-bisphosphate + ADP + H(+). Its function is as follows. Synthesis of fructose 2,6-bisphosphate. The polypeptide is Probable 6-phosphofructo-2-kinase PB17E12.14c (Schizosaccharomyces pombe (strain 972 / ATCC 24843) (Fission yeast)).